The chain runs to 293 residues: Ribosomal protein L11 methyltransferase (293 aa).

Thr-145, Gly-166, Asp-188, and Asn-230 together coordinate S-adenosyl-L-methionine.

Belongs to the methyltransferase superfamily. PrmA family.

It localises to the cytoplasm. It catalyses the reaction L-lysyl-[protein] + 3 S-adenosyl-L-methionine = N(6),N(6),N(6)-trimethyl-L-lysyl-[protein] + 3 S-adenosyl-L-homocysteine + 3 H(+). In terms of biological role, methylates ribosomal protein L11. This is Ribosomal protein L11 methyltransferase from Actinobacillus pleuropneumoniae serotype 3 (strain JL03).